Consider the following 772-residue polypeptide: DNA ligase (772 aa).

NAD(+) contacts are provided by residues 80-84 (DAEYD), 130-131 (SL), and Glu160. Lys162 acts as the N6-AMP-lysine intermediate in catalysis. NAD(+) contacts are provided by Arg183, Glu220, Lys336, and Lys360. The Zn(2+) site is built by Cys454, Cys457, Cys473, and Cys479. The BRCT domain occupies 685–772 (APEQTLEGLT…NGPQGITTIG (88 aa)).

This sequence belongs to the NAD-dependent DNA ligase family. LigA subfamily. It depends on Mg(2+) as a cofactor. Mn(2+) is required as a cofactor.

It catalyses the reaction NAD(+) + (deoxyribonucleotide)n-3'-hydroxyl + 5'-phospho-(deoxyribonucleotide)m = (deoxyribonucleotide)n+m + AMP + beta-nicotinamide D-nucleotide.. Functionally, DNA ligase that catalyzes the formation of phosphodiester linkages between 5'-phosphoryl and 3'-hydroxyl groups in double-stranded DNA using NAD as a coenzyme and as the energy source for the reaction. It is essential for DNA replication and repair of damaged DNA. The sequence is that of DNA ligase from Cutibacterium acnes (strain DSM 16379 / KPA171202) (Propionibacterium acnes).